The primary structure comprises 107 residues: Nucleoid-associated protein Msil_0275 (107 aa).

The protein belongs to the YbaB/EbfC family. In terms of assembly, homodimer.

The protein resides in the cytoplasm. It localises to the nucleoid. In terms of biological role, binds to DNA and alters its conformation. May be involved in regulation of gene expression, nucleoid organization and DNA protection. The sequence is that of Nucleoid-associated protein Msil_0275 from Methylocella silvestris (strain DSM 15510 / CIP 108128 / LMG 27833 / NCIMB 13906 / BL2).